Here is a 409-residue protein sequence, read N- to C-terminus: MTQKGSMKPVKKKKTEEPELEPLCCCEYIDRNGEKNHVATCLCDCQDLDEGCDRWITCKSLQPETCERIMDTISDRLRIPWLRGAKKVNISIIPPLVLLPVFLHVASWHFLLGVVVLTSLPVLALWYYYLTHRRKEQTLFFLSLGLFSLGYMYYVFLQEVVPKGRVGPVQLAVLTCGLFLILLALHRAKKNPGYLSNPASGDRSLSSSQLECLSRKGQEKTKGFPGADMSGSLNNRTTKDDPKGSSKMPAGSPTKAKEDWCAKCQLVRPARAWHCRICGICVRRMDHHCVWINSCVGESNHQAFILALLIFLLTSVYGITLTLDTICRDRSVFTALFYCPGVYANYSSALSFTCVWYSVIITAGMAYIFLIQLINISYNVTEREVQQALRQKTGRRLLCGLIVDTGLLG.

At 1 to 87 (MTQKGSMKPV…RIPWLRGAKK (87 aa)) the chain is on the cytoplasmic side. The helical transmembrane segment at 88–106 (VNISIIPPLVLLPVFLHVA) threads the bilayer. The Lumenal segment spans residues 107–109 (SWH). The helical transmembrane segment at 110–132 (FLLGVVVLTSLPVLALWYYYLTH) threads the bilayer. Topologically, residues 133–136 (RRKE) are cytoplasmic. A helical membrane pass occupies residues 137 to 157 (QTLFFLSLGLFSLGYMYYVFL). Topologically, residues 158–165 (QEVVPKGR) are lumenal. The helical transmembrane segment at 166–186 (VGPVQLAVLTCGLFLILLALH) threads the bilayer. Residues 187–302 (RAKKNPGYLS…NSCVGESNHQ (116 aa)) are Cytoplasmic-facing. The tract at residues 215–255 (RKGQEKTKGFPGADMSGSLNNRTTKDDPKGSSKMPAGSPTK) is disordered. Residues 259-309 (DWCAKCQLVRPARAWHCRICGICVRRMDHHCVWINSCVGESNHQAFILALL) form the DHHC domain. The S-palmitoyl cysteine intermediate role is filled by C289. A helical membrane pass occupies residues 303-323 (AFILALLIFLLTSVYGITLTL). The Lumenal portion of the chain corresponds to 324–331 (DTICRDRS). The helical transmembrane segment at 332-352 (VFTALFYCPGVYANYSSALSF) threads the bilayer. T353 is a topological domain (cytoplasmic). The helical transmembrane segment at 354–374 (CVWYSVIITAGMAYIFLIQLI) threads the bilayer. Topologically, residues 375-409 (NISYNVTEREVQQALRQKTGRRLLCGLIVDTGLLG) are lumenal.

This sequence belongs to the DHHC palmitoyltransferase family. In terms of assembly, interacts with NOS1.

The protein resides in the golgi apparatus membrane. Its subcellular location is the golgi apparatus. It localises to the trans-Golgi network membrane. It carries out the reaction L-cysteinyl-[protein] + hexadecanoyl-CoA = S-hexadecanoyl-L-cysteinyl-[protein] + CoA. Palmitoyltransferase that could catalyze the addition of palmitate onto various protein substrates and be involved in a variety of cellular processes. Palmitoyltransferase that mediates palmitoylation of KCNMA1, regulating localization of KCNMA1 to the plasma membrane. May be involved in NOS1 regulation and targeting to the synaptic membrane. The sequence is that of Palmitoyltransferase ZDHHC23 from Homo sapiens (Human).